The primary structure comprises 208 residues: Translation initiation factor 2 subunit beta (208 aa).

In terms of domain architecture, TRAM spans G144–S202.

The protein belongs to the eIF-2-beta/eIF-5 family. As to quaternary structure, heterotrimer composed of an alpha, a beta and a gamma chain.

EIF-2 functions in the early steps of protein synthesis by forming a ternary complex with GTP and initiator tRNA. This Thermoplasma volcanium (strain ATCC 51530 / DSM 4299 / JCM 9571 / NBRC 15438 / GSS1) protein is Translation initiation factor 2 subunit beta (eif2b).